Reading from the N-terminus, the 318-residue chain is Aspartate carbamoyltransferase catalytic subunit (318 aa).

Arg54 and Thr55 together coordinate carbamoyl phosphate. Residue Lys82 participates in L-aspartate binding. Residues Arg104, His134, and Gln137 each contribute to the carbamoyl phosphate site. Arg174 and Arg230 together coordinate L-aspartate. 2 residues coordinate carbamoyl phosphate: Gly271 and Pro272.

Belongs to the aspartate/ornithine carbamoyltransferase superfamily. ATCase family. In terms of assembly, heterododecamer (2C3:3R2) of six catalytic PyrB chains organized as two trimers (C3), and six regulatory PyrI chains organized as three dimers (R2).

The catalysed reaction is carbamoyl phosphate + L-aspartate = N-carbamoyl-L-aspartate + phosphate + H(+). Its pathway is pyrimidine metabolism; UMP biosynthesis via de novo pathway; (S)-dihydroorotate from bicarbonate: step 2/3. Functionally, catalyzes the condensation of carbamoyl phosphate and aspartate to form carbamoyl aspartate and inorganic phosphate, the committed step in the de novo pyrimidine nucleotide biosynthesis pathway. The protein is Aspartate carbamoyltransferase catalytic subunit of Clavibacter sepedonicus (Clavibacter michiganensis subsp. sepedonicus).